A 131-amino-acid polypeptide reads, in one-letter code: Type IV wide pilus major component PilA4 (131 aa).

Positions 1-6 (MRNAKG) are cleaved as a propeptide — leader sequence. An N-methylphenylalanine modification is found at F7. A helical membrane pass occupies residues 7-27 (FTLIELLIVIAIIAILAAVLI). The cysteines at positions 95 and 130 are disulfide-linked.

In terms of assembly, interacts with PilQ. In terms of processing, found in three forms of 14-kDa, 18-kDa and a glycosylated 23-kDa form. Both narrow and wide pili are glycosylated.

Its subcellular location is the cell inner membrane. It is found in the cell outer membrane. The protein resides in the periplasm. In terms of biological role, plays an essential role in the assembly of two types of T4P pili: a wide and a narrow that participate in natural transformation and twitching motility. Major component of the wide pilus that is essential for natural transformation working as a DNA translocator structure that spans the inner and outer membranes. In addition, participates in the assembly of the narrow pilus composed of the PilA5 subunit that is required for twitching motility. The protein is Type IV wide pilus major component PilA4 (pilA4) of Thermus thermophilus (strain ATCC BAA-163 / DSM 7039 / HB27).